The primary structure comprises 410 residues: Cytochrome P450 CYP107DY1 (410 aa).

Residues His106 and Arg110 each contribute to the heme site. 2 residues coordinate substrate: Thr249 and Glu253. Residues Arg302, His358, and Cys360 each coordinate heme.

It belongs to the cytochrome P450 family. Heme serves as cofactor.

It carries out the reaction mevastatin + 2 reduced [2Fe-2S]-[ferredoxin] + O2 + 2 H(+) = pravastatin lactone + 2 oxidized [2Fe-2S]-[ferredoxin] + H2O. Its function is as follows. Cytochrome P450 whose physiological substrate is unknown. In vitro, is able to catalyze the selective hydroxylation of mevastatin to pravastatin, the widely used therapeutic agent for hypercholesterolemia. The protein is Cytochrome P450 CYP107DY1 of Priestia megaterium (strain ATCC 12872 / QMB1551) (Bacillus megaterium).